The chain runs to 122 residues: Large ribosomal subunit protein uL14 (122 aa).

Belongs to the universal ribosomal protein uL14 family. As to quaternary structure, part of the 50S ribosomal subunit. Forms a cluster with proteins L3 and L19. In the 70S ribosome, L14 and L19 interact and together make contacts with the 16S rRNA in bridges B5 and B8.

Functionally, binds to 23S rRNA. Forms part of two intersubunit bridges in the 70S ribosome. This Hyphomonas neptunium (strain ATCC 15444) protein is Large ribosomal subunit protein uL14.